Reading from the N-terminus, the 100-residue chain is NADH-quinone oxidoreductase subunit K (100 aa).

Transmembrane regions (helical) follow at residues 1–21 (MIGLNHYLIVSGLLFCIGLAG), 28–48 (ILLLFFSTEIMLNAINIGFVA), and 64–84 (FIIAIAASEVAIGLGLVILWF).

The protein belongs to the complex I subunit 4L family. In terms of assembly, NDH-1 is composed of 14 different subunits. Subunits NuoA, H, J, K, L, M, N constitute the membrane sector of the complex.

It is found in the cell inner membrane. It carries out the reaction a quinone + NADH + 5 H(+)(in) = a quinol + NAD(+) + 4 H(+)(out). Its function is as follows. NDH-1 shuttles electrons from NADH, via FMN and iron-sulfur (Fe-S) centers, to quinones in the respiratory chain. The immediate electron acceptor for the enzyme in this species is believed to be ubiquinone. Couples the redox reaction to proton translocation (for every two electrons transferred, four hydrogen ions are translocated across the cytoplasmic membrane), and thus conserves the redox energy in a proton gradient. The chain is NADH-quinone oxidoreductase subunit K from Helicobacter pylori (strain P12).